A 141-amino-acid polypeptide reads, in one-letter code: Hemoglobin subunit alpha (141 aa).

One can recognise a Globin domain in the interval 1–141 (VLSSDDKCNV…VSSVLTSKYR (141 aa)). His58 provides a ligand contact to O2. His87 is a binding site for heme b.

This sequence belongs to the globin family. As to quaternary structure, heterotetramer of two alpha chains and two beta chains. As to expression, red blood cells.

In terms of biological role, involved in oxygen transport from the lung to the various peripheral tissues. Has antimicrobial activity against B.subtilis ATCC 6633. Has antioxidant activity. In Crocodylus siamensis (Siamese crocodile), this protein is Hemoglobin subunit alpha.